Here is a 30-residue protein sequence, read N- to C-terminus: Agglutinin alpha-1 chain (30 aa).

Residues 1 to 30 (GVAFDDGSYTGIREINFEYNRETAIGGXQV) enclose the Jacalin-type lectin domain.

The protein belongs to the jacalin lectin family. In terms of assembly, tetramer of four alpha chains associated with two or four beta chains.

N-acetyl-galactosamine and D-galactose specific lectin. Binds the Tn-antigen structure GalNAc-alpha-1-O-Ser, the T-antigen structure Gal-beta1-3-GalNAc and IgA. The sequence is that of Agglutinin alpha-1 chain from Morus nigra (Black mulberry).